The sequence spans 84 residues: NADH dehydrogenase [ubiquinone] 1 alpha subcomplex subunit 3 (84 aa).

Position 2 is an N-acetylalanine (Ala2). Residues 19-39 form a helical membrane-spanning segment; the sequence is LVVSFSVWGLAIIMPMISPYT. The segment at 59–84 is disordered; sequence DDGNMPDVPSHPQDPLGPSLDWLKNL.

It belongs to the complex I NDUFA3 subunit family. In terms of assembly, complex I is composed of 45 different subunits.

It localises to the mitochondrion inner membrane. Its function is as follows. Accessory subunit of the mitochondrial membrane respiratory chain NADH dehydrogenase (Complex I), that is believed not to be involved in catalysis. Complex I functions in the transfer of electrons from NADH to the respiratory chain. The immediate electron acceptor for the enzyme is believed to be ubiquinone. This is NADH dehydrogenase [ubiquinone] 1 alpha subcomplex subunit 3 (Ndufa3) from Mus musculus (Mouse).